The chain runs to 235 residues: Protein CIST1 (235 aa).

Positions 1 to 31 (MASSQPPLPPPPPPLLLLALLLLLKVSDTSS) are cleaved as a signal peptide. Low complexity-rich tracts occupy residues 28–61 (DTSSSVSTATSTASETDNLTSKPLTSSFSSSSPT) and 76–110 (STSHPDSSSSESTISHSPSNSGTTSTTQPTSSQPE). The tract at residues 28–159 (DTSSSVSTAT…TGPPSVSLAT (132 aa)) is disordered. At 32–184 (SVSTATSTAS…GVPRLHRNPG (153 aa)) the chain is on the extracellular side. A glycan (N-linked (GlcNAc...) asparagine) is linked at Asn45. Residues 114 to 136 (HPSSGSPSSEHTVTSPSLGSVSL) are compositionally biased toward polar residues. The chain crosses the membrane as a helical span at residues 185–205 (VVVAVCLLVSALLIGGAIMAV). Over 206 to 235 (RRCHNGVSEFQKLDEGLVSRRSSSAHHTLP) the chain is Cytoplasmic.

As to expression, highly expressed in large intestine, small intestine, rumen, and kidney tissues.

The protein resides in the membrane. In Bos taurus (Bovine), this protein is Protein CIST1 (CIST1).